The following is a 256-amino-acid chain: DNA repair protein RecO (256 aa).

The protein belongs to the RecO family.

Involved in DNA repair and RecF pathway recombination. This is DNA repair protein RecO from Desulforamulus reducens (strain ATCC BAA-1160 / DSM 100696 / MI-1) (Desulfotomaculum reducens).